A 431-amino-acid polypeptide reads, in one-letter code: Enolase (431 aa).

Q167 contacts (2R)-2-phosphoglycerate. The Proton donor role is filled by E209. D246, E289, and D316 together coordinate Mg(2+). K341, R370, S371, and K392 together coordinate (2R)-2-phosphoglycerate. The active-site Proton acceptor is the K341.

The protein belongs to the enolase family. Component of the RNA degradosome, a multiprotein complex involved in RNA processing and mRNA degradation. It depends on Mg(2+) as a cofactor.

It is found in the cytoplasm. The protein localises to the secreted. Its subcellular location is the cell surface. It catalyses the reaction (2R)-2-phosphoglycerate = phosphoenolpyruvate + H2O. The protein operates within carbohydrate degradation; glycolysis; pyruvate from D-glyceraldehyde 3-phosphate: step 4/5. In terms of biological role, catalyzes the reversible conversion of 2-phosphoglycerate (2-PG) into phosphoenolpyruvate (PEP). It is essential for the degradation of carbohydrates via glycolysis. This chain is Enolase, found in Hahella chejuensis (strain KCTC 2396).